We begin with the raw amino-acid sequence, 27 residues long: Phospholipase A2 taicatoxin (27 aa).

The protein belongs to the phospholipase A2 family. Group I subfamily. As to quaternary structure, heterotrimer composed of an alpha-neurotoxin-like peptide of 8 kDa (AC P0CJ35), this neurotoxic phospholipase of 16 kDa and a serine protease inhibitor of 7 kDa (AC B7S4N9) at an approximate stoichiometry of 1:1:4; non-covalently linked. Requires Ca(2+) as cofactor. In terms of processing, contains 7 disulfide bonds. As to expression, expressed by the venom gland.

It localises to the secreted. The catalysed reaction is a 1,2-diacyl-sn-glycero-3-phosphocholine + H2O = a 1-acyl-sn-glycero-3-phosphocholine + a fatty acid + H(+). Functionally, heterotrimer: blocks the voltage-dependent L-type calcium channels from the heart, and the small conductance calcium-activated potassium channels in the chromaffin cells and in the brain. Is very toxic to mice. Monomer: Snake venom phospholipase A2 (PLA2) that has neurotoxic activities. Voltage-dependently affects ionic currents in chick (Gallus domesticus) dorsal root ganglion cells. PLA2 catalyzes the calcium-dependent hydrolysis of the 2-acyl groups in 3-sn-phosphoglycerides. The chain is Phospholipase A2 taicatoxin from Oxyuranus scutellatus scutellatus (Australian taipan).